A 1098-amino-acid polypeptide reads, in one-letter code: Bifunctional helicase and thymine dioxygenase JBP2 (1098 aa).

The interval 1–540 (MLNGLTRVST…PPLFVPTRLA (540 aa)) is thymine dioxygenase. Residues histidine 415, aspartate 417, and histidine 465 each contribute to the Fe cation site. Arginine 479 contributes to the 2-oxoglutarate binding site. The interval 541–1098 (SHLAPVQLAA…RYQESVRESE (558 aa)) is DNA Helicase. A Helicase ATP-binding domain is found at 555 to 730 (VERTEKQSGC…YRLVGWVNKG (176 aa)). 568 to 575 (MTMGLGKT) is an ATP binding site. The DEAH box motif lies at 681–684 (DEGH). The Helicase C-terminal domain maps to 897–1057 (VLVDIVLRVQ…ALPDELEDCA (161 aa)).

The protein in the C-terminal section; belongs to the SNF2/RAD54 helicase family. This sequence in the N-terminal section; belongs to the TET family. JBP2 subfamily. Requires Fe(2+) as cofactor.

It localises to the nucleus. It catalyses the reaction ATP + H2O = ADP + phosphate + H(+). It carries out the reaction thymine + 2-oxoglutarate + O2 = 5-hydroxymethyluracil + succinate + CO2. Functionally, dioxygenase that catalyzes the first step of DNA base J (beta-d-glucosyl-HOMedU) biosynthesis by converting thymine to 5-hydroxymethyluracil (HOMedU). DNA base J is a hypermodified thymidine residue found in the genome of kinetoplastid parasites, which is localized primarily to repetitive DNA, namely the telomeres, and is implicated in the regulation of antigenic variation. Probably also acts as a DNA helicase. Recognizes and binds specific regions of the genome, hydrolyzes ATP and allows the DNA base J de novo synthesis. Involved in initial synthesis of DNA base J, JBP1 being able to act via the basal level of DNA base J and propagate further synthesis. In contrast to JBP1, it does not specifically bind DNA base J, however it binds chromatin. The polypeptide is Bifunctional helicase and thymine dioxygenase JBP2 (JBP2) (Leishmania tarentolae (Sauroleishmania tarentolae)).